A 271-amino-acid chain; its full sequence is Putative hydro-lyase blr2921 (271 aa).

This sequence belongs to the D-glutamate cyclase family.

The sequence is that of Putative hydro-lyase blr2921 from Bradyrhizobium diazoefficiens (strain JCM 10833 / BCRC 13528 / IAM 13628 / NBRC 14792 / USDA 110).